A 224-amino-acid chain; its full sequence is Proteasome subunit beta (224 aa).

Positions 1-6 are cleaved as a propeptide — removed in mature form; by autocatalysis; sequence MDVMKG. T7 (nucleophile) is an active-site residue.

This sequence belongs to the peptidase T1B family. The 20S proteasome core is composed of 14 alpha and 14 beta subunits that assemble into four stacked heptameric rings, resulting in a barrel-shaped structure. The two inner rings, each composed of seven catalytic beta subunits, are sandwiched by two outer rings, each composed of seven alpha subunits. The catalytic chamber with the active sites is on the inside of the barrel. Has a gated structure, the ends of the cylinder being occluded by the N-termini of the alpha-subunits. Is capped at one or both ends by the proteasome regulatory ATPase, PAN.

It localises to the cytoplasm. It carries out the reaction Cleavage of peptide bonds with very broad specificity.. The formation of the proteasomal ATPase PAN-20S proteasome complex, via the docking of the C-termini of PAN into the intersubunit pockets in the alpha-rings, triggers opening of the gate for substrate entry. Interconversion between the open-gate and close-gate conformations leads to a dynamic regulation of the 20S proteasome proteolysis activity. Functionally, component of the proteasome core, a large protease complex with broad specificity involved in protein degradation. This Methanocaldococcus fervens (strain DSM 4213 / JCM 15782 / AG86) (Methanococcus fervens) protein is Proteasome subunit beta.